The sequence spans 265 residues: UPF0026 protein slr1464 (265 aa).

Positions 16–252 constitute a Radical SAM core domain; sequence RYGRSLGIDP…QNLAKKISGA (237 aa). [4Fe-4S] cluster contacts are provided by cysteine 32, cysteine 36, and cysteine 39. Residues 204 to 230 form a disordered region; it reads RPTRPKPLQRELEGRGNHTGTPYGDRP.

Belongs to the UPF0026 family. [4Fe-4S] cluster is required as a cofactor.

The protein is UPF0026 protein slr1464 of Synechocystis sp. (strain ATCC 27184 / PCC 6803 / Kazusa).